The following is a 389-amino-acid chain: GTPase Obg (389 aa).

Residues 1-159 (MKFVDEAVIR…RSLKLELLLL (159 aa)) enclose the Obg domain. Positions 160–333 (ADVGLLGMPN…LALKLLDYIA (174 aa)) constitute an OBG-type G domain. GTP contacts are provided by residues 166–173 (GMPNAGKS), 191–195 (FTTLV), 213–216 (DIPG), 283–286 (NKTD), and 314–316 (SAY). Residues serine 173 and threonine 193 each contribute to the Mg(2+) site.

This sequence belongs to the TRAFAC class OBG-HflX-like GTPase superfamily. OBG GTPase family. As to quaternary structure, monomer. It depends on Mg(2+) as a cofactor.

It is found in the cytoplasm. In terms of biological role, an essential GTPase which binds GTP, GDP and possibly (p)ppGpp with moderate affinity, with high nucleotide exchange rates and a fairly low GTP hydrolysis rate. Plays a role in control of the cell cycle, stress response, ribosome biogenesis and in those bacteria that undergo differentiation, in morphogenesis control. The sequence is that of GTPase Obg from Shewanella baltica (strain OS223).